A 1151-amino-acid chain; its full sequence is SCF E3 ubiquitin ligase complex F-box protein GRR1 (1151 aa).

Positions 1–18 are enriched in basic and acidic residues; the sequence is MDQDNNNHNDSNRLHPPD. The tract at residues 1–72 is disordered; it reads MDQDNNNHND…ATSERNASEV (72 aa). A compositionally biased stretch (low complexity) spans 38-49; sequence NNNNNNNNNNNN. Positions 58–72 are enriched in basic and acidic residues; the sequence is RTRETATSERNASEV. Phosphoserine is present on residues serine 199 and serine 300. The region spanning 314 to 361 is the F-box domain; the sequence is VFALNMLPSEILHLILDKLNQKYDIVKFLTVSKLWAEIIVKILYYRPH. LRR repeat units follow at residues 399–423, 424–449, 450–475, 476–501, 502–527, 528–553, 554–582, 583–608, 609–634, 635–660, 661–685, 686–714, and 715–740; these read GDYM…TLVF, CKHI…DITG, IRDV…YVPQ, ARNV…KITA, NNNM…DITL, SPNV…RITH, NTNI…DLSG, CENI…FLGK, CSRI…HFGH, CFNI…DFAC, CTNL…GLVK, CTQM…HLSY, and CSNL…SLTA. Residues 1066–1080 show a composition bias toward low complexity; it reads AGANDTSNNETNNGN. 2 disordered regions span residues 1066-1090 and 1118-1151; these read AGAN…NPNF and VRNN…EDML.

Interacts with SKP1. Component of the probable SCF(GRR1) complex containing CDC53, SKP1, RBX1 and GRR1.

It is found in the membrane. It participates in protein modification; protein ubiquitination. Substrate recognition component of a SCF (SKP1-CUL1-F-box protein) E3 ubiquitin-protein ligase complex which mediates the ubiquitination and subsequent proteasomal degradation of target proteins. Recognizes and directs ubiquitination of phosphorylated CLN1, CLN2 and GIC2. Probably constitutes the primary response element required for the generation or interpretation of the signal that induces glucose repression. The protein is SCF E3 ubiquitin ligase complex F-box protein GRR1 (GRR1) of Saccharomyces cerevisiae (strain ATCC 204508 / S288c) (Baker's yeast).